Here is a 232-residue protein sequence, read N- to C-terminus: Peroxisomal protein PEX21 (232 aa).

Residue Cys5 forms a Glycyl cysteine thioester (Cys-Gly) (interchain with G-Cter in ubiquitin) linkage.

Belongs to the peroxin-21 family. As to quaternary structure, interacts with PEX7. Monoubiquitinated at Cys-5; acts as a signal for PEX21 extraction and is required for proper export from peroxisomes and recycling.

It is found in the cytoplasm. The protein localises to the cytosol. Its subcellular location is the peroxisome. In terms of biological role, mediates peroxisomal import of proteins containing a C-terminal PTS2-type peroxisomal targeting signal via its interaction with PEX7. Interaction with PEX7 only takes place when PEX7 is associated with cargo proteins containing a PTS2 peroxisomal targeting signal. PEX7 along with PTS2-containing cargo proteins are then translocated through the PEX13-PEX14 docking complex together with PEX21. The polypeptide is Peroxisomal protein PEX21 (PEX21) (Candida glabrata (strain ATCC 2001 / BCRC 20586 / JCM 3761 / NBRC 0622 / NRRL Y-65 / CBS 138) (Yeast)).